We begin with the raw amino-acid sequence, 91 residues long: Small ribosomal subunit protein bS20 (91 aa).

It belongs to the bacterial ribosomal protein bS20 family.

In terms of biological role, binds directly to 16S ribosomal RNA. The sequence is that of Small ribosomal subunit protein bS20 from Caulobacter vibrioides (strain ATCC 19089 / CIP 103742 / CB 15) (Caulobacter crescentus).